Consider the following 154-residue polypeptide: Proteinase inhibitor type-2 P303.51 (154 aa).

An N-terminal signal peptide occupies residues 1–25; sequence MAVHKEVNFVAYLLIVLGLLVLVSA. A run of 2 repeats spans residues 31 to 87 and 88 to 147. 8 disulfides stabilise this stretch: Cys-34-Cys-122, Cys-38-Cys-118, Cys-46-Cys-128, Cys-58-Cys-95, Cys-61-Cys-79, Cys-62-Cys-91, Cys-68-Cys-104, and Cys-121-Cys-139.

The protein belongs to the protease inhibitor I20 (potato type II proteinase inhibitor) family.

In Solanum tuberosum (Potato), this protein is Proteinase inhibitor type-2 P303.51.